A 424-amino-acid chain; its full sequence is MDQPSGRSFMQVLCEKYSPENFPYRRGPGMGVHVPATPQGSPMKDRLNLPSVLVLNSCGITCAGDEREIAAFCAHVSELDLSDNKLQDWHEVSKIVSNVPQLEFLNLSSNPLSLSVLERTCAGSFSGVRKLVLNNSKASWETVHTILQELPDLEELFLCLNDYETVSCPSVCCHSLKLLHITDNNLQEWTEIRKLGVMFPSLDTLVLANNHVNAIEEPADSLARLFPNLRSISLHKSGLQSWEDIDKLNSFPKLEEVRLLGIPLLQPYTTEERRKLVVARLPSVSKLNGSVVTDGEREDSERFFIRYYVDVPQEEVPFRYHELITKYGKLEPLAEVDLRPQSSAKVEVHFNDQVEEVSIRLDQTVAELKRQLKTLVQLPTSSMLLYYFDHEAPFGPEEMKYSSRALHSFGIRDGDKIFVESKTK.

A phosphoserine mark is found at Ser18 and Ser41. LRR repeat units lie at residues 73–98 (CAHV…IVSN), 99–123 (VPQL…TCAG), 124–147 (SFSG…HTIL), 150–172 (LPDL…PSVC), 173–197 (CHSL…KLGV), 199–224 (FPSL…SLAR), and 226–250 (FPNL…KLNS). The 42-residue stretch at 262–303 (IPLLQPYTTEERRKLVVARLPSVSKLNGSVVTDGEREDSERF) folds into the LRRCT domain. Residues 334–424 (AEVDLRPQSS…DKIFVESKTK (91 aa)) enclose the Ubiquitin-like domain. A coiled-coil region spans residues 350 to 375 (FNDQVEEVSIRLDQTVAELKRQLKTL).

Its subcellular location is the cytoplasm. The protein resides in the cytoskeleton. Its function is as follows. Acts as a regulator of tubulin stability. The sequence is that of Tubulin-specific chaperone cofactor E-like protein (Tbcel) from Rattus norvegicus (Rat).